A 490-amino-acid polypeptide reads, in one-letter code: ATP synthase subunit beta, plastid (490 aa).

Gly-170–Thr-177 is a binding site for ATP.

The protein belongs to the ATPase alpha/beta chains family. In terms of assembly, F-type ATPases have 2 components, CF(1) - the catalytic core - and CF(0) - the membrane proton channel. CF(1) has five subunits: alpha(3), beta(3), gamma(1), delta(1), epsilon(1). CF(0) has four main subunits: a(1), b(1), b'(1) and c(9-12).

The protein resides in the plastid membrane. The catalysed reaction is ATP + H2O + 4 H(+)(in) = ADP + phosphate + 5 H(+)(out). Produces ATP from ADP in the presence of a proton gradient across the membrane. The catalytic sites are hosted primarily by the beta subunits. The polypeptide is ATP synthase subunit beta, plastid (Cuscuta exaltata (Tall dodder)).